A 470-amino-acid polypeptide reads, in one-letter code: Uronate isomerase (470 aa).

Belongs to the metallo-dependent hydrolases superfamily. Uronate isomerase family.

The enzyme catalyses D-glucuronate = D-fructuronate. It catalyses the reaction aldehydo-D-galacturonate = keto-D-tagaturonate. It participates in carbohydrate metabolism; pentose and glucuronate interconversion. This chain is Uronate isomerase, found in Salmonella typhi.